Here is a 297-residue protein sequence, read N- to C-terminus: Formylmethanofuran--tetrahydromethanopterin formyltransferase (297 aa).

Belongs to the FTR family. As to quaternary structure, homotetramer.

It is found in the cytoplasm. The enzyme catalyses N-formylmethanofuran + 5,6,7,8-tetrahydromethanopterin + H(+) = N(5)-formyl-5,6,7,8-tetrahydromethanopterin + methanofuran. The protein operates within one-carbon metabolism; methanogenesis from CO(2); 5,10-methenyl-5,6,7,8-tetrahydromethanopterin from CO(2): step 2/3. Functionally, catalyzes the reversible transfer of a formyl group from formylmethanofuran (formyl-MFR) to tetrahydromethanopterin (H(4)MPT) to produce 5-formyl tetrahydromethanopterin (5-formyl-H(4)MPT) and methanofuran (MFR). The sequence is that of Formylmethanofuran--tetrahydromethanopterin formyltransferase from Methanothermus fervidus (strain ATCC 43054 / DSM 2088 / JCM 10308 / V24 S).